A 149-amino-acid chain; its full sequence is Squidulin (149 aa).

Position 1 is an N-acetylalanine (Ala1). EF-hand domains follow at residues 7-42 (KQIA…LGRT), 43-78 (PSDA…QMGP), 80-115 (DPEK…FSDE), and 117-149 (LTSE…MTPK). 19 residues coordinate Ca(2+): Asp20, Asp22, Asp24, Gln26, Glu31, Asp56, Asp58, Asn60, Thr62, Glu67, Asp93, Asp95, Asn97, Glu104, Asp130, Asp132, Asp134, Met136, and Glu141.

It belongs to the calmodulin family.

Its function is as follows. Not known. This protein has four functional calcium-binding sites. The polypeptide is Squidulin (Doryteuthis pealeii (Longfin inshore squid)).